Reading from the N-terminus, the 777-residue chain is Semaphorin-4F (777 aa).

The signal sequence occupies residues 1-40 (MLARAERPRPGPRPPPVSLFPPPSSLLLLLLAMLSAPVCG). Topologically, residues 41 to 667 (RVPRSVPRTS…PANRAHTVVG (627 aa)) are extracellular. Residues 48-516 (RTSLPISEAD…SHTEVTQVNT (469 aa)) enclose the Sema domain. Residue asparagine 70 is glycosylated (N-linked (GlcNAc...) asparagine). Cysteine 118 and cysteine 128 are disulfide-bonded. Asparagine 139 carries N-linked (GlcNAc...) asparagine glycosylation. Cystine bridges form between cysteine 146/cysteine 155, cysteine 279/cysteine 390, and cysteine 303/cysteine 349. Asparagine 515 carries N-linked (GlcNAc...) asparagine glycosylation. The region spanning 518–569 (NCGRLQSCSECILAQDPVCAWSFRLDACVAHAGEHRGMVQDIESADVSSLCP) is the PSI domain. Cystine bridges form between cysteine 519/cysteine 536, cysteine 528/cysteine 545, and cysteine 593/cysteine 634. Residues 586 to 641 (VGHVVLPCSPSSAWASCVWHQPSGVTSLTPRRDGLEVVVTPGAMGAYACECQEGGA) form the Ig-like C2-type domain. Residues 668–688 (AGLVGFFLGVLAASLTLLLIG) traverse the membrane as a helical segment. Over 689-777 (RRQQRRRQRE…PLATCDETSI (89 aa)) the chain is Cytoplasmic. A disordered region spans residues 703-742 (DKVGLDLGAPPSGTTSYSQDPPSPSPEDERLPLALGKRGS). Phosphoserine occurs at positions 725 and 727. Positions 775 to 777 (TSI) match the PDZ-binding motif.

This sequence belongs to the semaphorin family. Interacts (via PDZ-binding motif) with DLG4/SAP90 (via PDZ domain 2); this interaction may promote translocation of DLG4/SAP90 to the membrane. In terms of tissue distribution, expressed throughout the adult brain, where it shows particularly strong expression in the hippocampus, corpus callosum, granular layer and deep nuclei of the cerebellum, and the mitral layer of the olfactory bulb (at protein level). At the cellular level, detected in neuronal precursors, postmitotic neurons, pyramidal neurons, and glial cells including mature oligodendocytes and oligodendroglial precursor cells (at protein level).

It localises to the cell membrane. The protein resides in the postsynaptic density. The protein localises to the perikaryon. Its subcellular location is the cell projection. It is found in the dendrite. Its function is as follows. Probable cell surface receptor that regulates oligodendroglial precursor cell migration. Might also regulate differentiation of oligodendroglial precursor cells. Has growth cone collapse activity against retinal ganglion-cell axons. This is Semaphorin-4F (Sema4f) from Mus musculus (Mouse).